The following is a 239-amino-acid chain: Ribosomal RNA small subunit methyltransferase G (239 aa).

Residues Gly-79, Phe-84, 130–131 (AE), and Arg-149 contribute to the S-adenosyl-L-methionine site.

The protein belongs to the methyltransferase superfamily. RNA methyltransferase RsmG family.

The protein resides in the cytoplasm. Its function is as follows. Specifically methylates the N7 position of a guanine in 16S rRNA. The polypeptide is Ribosomal RNA small subunit methyltransferase G (Lactobacillus delbrueckii subsp. bulgaricus (strain ATCC 11842 / DSM 20081 / BCRC 10696 / JCM 1002 / NBRC 13953 / NCIMB 11778 / NCTC 12712 / WDCM 00102 / Lb 14)).